Reading from the N-terminus, the 290-residue chain is 4-diphosphocytidyl-2-C-methyl-D-erythritol kinase (290 aa).

K14 is a catalytic residue. An ATP-binding site is contributed by 103–113 (PMGGGLGGGSS). The active site involves D145.

The protein belongs to the GHMP kinase family. IspE subfamily. In terms of assembly, homodimer.

It carries out the reaction 4-CDP-2-C-methyl-D-erythritol + ATP = 4-CDP-2-C-methyl-D-erythritol 2-phosphate + ADP + H(+). The protein operates within isoprenoid biosynthesis; isopentenyl diphosphate biosynthesis via DXP pathway; isopentenyl diphosphate from 1-deoxy-D-xylulose 5-phosphate: step 3/6. Catalyzes the phosphorylation of the position 2 hydroxy group of 4-diphosphocytidyl-2C-methyl-D-erythritol. The chain is 4-diphosphocytidyl-2-C-methyl-D-erythritol kinase from Pectobacterium atrosepticum (strain SCRI 1043 / ATCC BAA-672) (Erwinia carotovora subsp. atroseptica).